A 346-amino-acid polypeptide reads, in one-letter code: Centromere protein L (346 aa).

At Ser-41 the chain carries Phosphoserine. Thr-45 carries the post-translational modification Phosphothreonine. Ser-55 bears the Phosphoserine mark.

The protein belongs to the CENP-L/IML3 family. Component of the CENPA-CAD complex, composed of CENPI, CENPK, CENPL, CENPO, CENPP, CENPQ, CENPR and CENPS. The CENPA-CAD complex interacts with the CENPA-NAC complex, at least composed of CENPA, CENPC, CENPH, CENPM, CENPN, CENPT and CENPU.

The protein resides in the nucleus. It localises to the chromosome. The protein localises to the centromere. In terms of biological role, component of the CENPA-CAD (nucleosome distal) complex, a complex recruited to centromeres which is involved in assembly of kinetochore proteins, mitotic progression and chromosome segregation. May be involved in incorporation of newly synthesized CENPA into centromeres via its interaction with the CENPA-NAC complex. The sequence is that of Centromere protein L (CENPL) from Bos taurus (Bovine).